Consider the following 382-residue polypeptide: MKKLIILGSTGSIGRQTLDVVRSLKEEFEIVGLTGYNNVSLLSKQIKEFRPKVVAVKDEEKARKLRENLDEPIEVLTGKEGLKEIVKYEADMVVVAVEGIAGLIPTVEAIKLGKNIALANKEVLVTAGEIVMGLVKEKKIEFLPVDSEHSAILQCLKGNNKREVSNLILTASGGPFRGKKKKDLVNVTVEEALKHPNWKMGKKITIDSATLMNKGFEVIEARWLFDMPLDKIKVVIHPQSIIHSMVEYVDGSVIAQLSVPDMRIAIQYALNYPDRKYVEGVKFLDFYALGQLTFEEPDFETFKCLSLAYHAAECGGTMTAVLNAADEVAVSLFLQNKINFLEIAEIIEEALENHKNIQNPTLDDIISVDLETRERIMRKYLR.

NADPH-binding residues include threonine 10, glycine 11, serine 12, isoleucine 13, asparagine 38, and asparagine 120. Position 121 (lysine 121) interacts with 1-deoxy-D-xylulose 5-phosphate. Residue glutamate 122 participates in NADPH binding. Residue aspartate 146 participates in Mn(2+) binding. 1-deoxy-D-xylulose 5-phosphate contacts are provided by serine 147, glutamate 148, serine 172, and histidine 195. Glutamate 148 is a binding site for Mn(2+). Glycine 201 contacts NADPH. Residues serine 208, asparagine 213, lysine 214, and glutamate 217 each coordinate 1-deoxy-D-xylulose 5-phosphate. Glutamate 217 serves as a coordination point for Mn(2+).

Belongs to the DXR family. The cofactor is Mg(2+). Requires Mn(2+) as cofactor.

The enzyme catalyses 2-C-methyl-D-erythritol 4-phosphate + NADP(+) = 1-deoxy-D-xylulose 5-phosphate + NADPH + H(+). It participates in isoprenoid biosynthesis; isopentenyl diphosphate biosynthesis via DXP pathway; isopentenyl diphosphate from 1-deoxy-D-xylulose 5-phosphate: step 1/6. Functionally, catalyzes the NADPH-dependent rearrangement and reduction of 1-deoxy-D-xylulose-5-phosphate (DXP) to 2-C-methyl-D-erythritol 4-phosphate (MEP). The polypeptide is 1-deoxy-D-xylulose 5-phosphate reductoisomerase (Caldanaerobacter subterraneus subsp. tengcongensis (strain DSM 15242 / JCM 11007 / NBRC 100824 / MB4) (Thermoanaerobacter tengcongensis)).